Here is a 305-residue protein sequence, read N- to C-terminus: Cytochrome c biogenesis protein CcsA (305 aa).

The next 8 membrane-spanning stretches (helical) occupy residues 11–31 (GLGFGAFLLLLLALPLAFWAV), 37–57 (TGIVQLLVALANLLLTSQLVL), 63–83 (GHFPISNLYESLCFLAWACTL), 96–116 (IVAAAATPMGLGCIAFASFAL), 141–161 (VIMVSYAALLVGSLLSLAVLL), 212–232 (TITVGFLMLTVGIVSGAVWAN), 246–263 (TWALICWLVYAAYLHTRL), and 275–295 (VAVVGLVVIAVCYIGVNLLGI).

This sequence belongs to the CcmF/CycK/Ccl1/NrfE/CcsA family. In terms of assembly, may interact with ccs1.

Its subcellular location is the cellular thylakoid membrane. In terms of biological role, required during biogenesis of c-type cytochromes (cytochrome c6 and cytochrome f) at the step of heme attachment. This is Cytochrome c biogenesis protein CcsA from Parasynechococcus marenigrum (strain WH8102).